A 291-amino-acid polypeptide reads, in one-letter code: MKFKKMLTLAAIGLSGFGLVACGNQSAASKQSASGTIEVISRENGSGTRGAFTEITGILKKDGDKKIDNTAKTAVIQNSTEGVLSAVQGNANAIGYISLGSLTKSVKALEIDGVKASRDTVLDGEYPLQRPFNIVWSSNLSKLGQDFISFIHSKQGQQVVTDNKFIEAKTETTEYTSQHLSGKLSVVGSTSVSSLMEKLAEAYKKENPEVTIDITSNGSSAGITAVKEKTADIGMVSRELTPEEGKSLTHDAIALDGIAVVVNNDNKASQVSMAELADVFSGKLTTWDKIK.

The first 21 residues, 1 to 21 (MKFKKMLTLAAIGLSGFGLVA), serve as a signal peptide directing secretion. C22 is lipidated: N-palmitoyl cysteine. C22 carries S-diacylglycerol cysteine lipidation.

It belongs to the PstS family. The complex is composed of two ATP-binding proteins (PstB), two transmembrane proteins (PstC and PstA) and a solute-binding protein (PstS).

The protein resides in the cell membrane. Its function is as follows. Part of the ABC transporter complex PstSACB involved in phosphate import. The polypeptide is Phosphate-binding protein PstS 2 (pstS2) (Streptococcus pneumoniae serotype 4 (strain ATCC BAA-334 / TIGR4)).